The sequence spans 291 residues: U7 snRNA-associated Sm-like protein LSm11 (291 aa).

The segment at 55 to 84 (ARGRARGAQRGQSRGPGGKRKGRKPEPDPE) is disordered. The 76-residue stretch at 124 to 199 (SPLGELNRCV…LTLTRLFDRL (76 aa)) folds into the Sm domain. Residues 155-289 (GFIVAFDKFW…RGENVLLVHI (135 aa)) are SM. Residues 203–266 (EPGSHDPAKG…RRNRKEKVDY (64 aa)) are disordered. The span at 251–261 (NRPKQRRRNRK) shows a compositional bias: basic residues.

Belongs to the snRNP Sm proteins family. In terms of assembly, component of the heptameric ring U7 snRNP complex.

It is found in the nucleus. Functionally, component of the U7 snRNP complex that is involved in the histone 3'-end pre-mRNA processing. Increases U7 snRNA levels but not histone 3'-end pre-mRNA processing activity, when overexpressed. Binds specifically to the Sm-binding site of U7 snRNA. The polypeptide is U7 snRNA-associated Sm-like protein LSm11 (Xenopus laevis (African clawed frog)).